We begin with the raw amino-acid sequence, 378 residues long: Ribosomal RNA large subunit methyltransferase G (378 aa).

It belongs to the methyltransferase superfamily. RlmG family.

It localises to the cytoplasm. The catalysed reaction is guanosine(1835) in 23S rRNA + S-adenosyl-L-methionine = N(2)-methylguanosine(1835) in 23S rRNA + S-adenosyl-L-homocysteine + H(+). Functionally, specifically methylates the guanine in position 1835 (m2G1835) of 23S rRNA. In Salmonella gallinarum (strain 287/91 / NCTC 13346), this protein is Ribosomal RNA large subunit methyltransferase G.